We begin with the raw amino-acid sequence, 141 residues long: Large ribosomal subunit protein uL11 (141 aa).

This sequence belongs to the universal ribosomal protein uL11 family. Part of the ribosomal stalk of the 50S ribosomal subunit. Interacts with L10 and the large rRNA to form the base of the stalk. L10 forms an elongated spine to which L12 dimers bind in a sequential fashion forming a multimeric L10(L12)X complex. In terms of processing, one or more lysine residues are methylated.

Functionally, forms part of the ribosomal stalk which helps the ribosome interact with GTP-bound translation factors. This Trichlorobacter lovleyi (strain ATCC BAA-1151 / DSM 17278 / SZ) (Geobacter lovleyi) protein is Large ribosomal subunit protein uL11.